Here is a 394-residue protein sequence, read N- to C-terminus: Arogenate dehydratase 2 (394 aa).

The interval 1 to 24 (MAATTTLRSPKIPHPPPESTPSNL) is disordered. A chloroplast-targeting transit peptide spans 1–47 (MAATTTLRSPKIPHPPPESTPSNLSYLSQISLTPVPKRRRFISIYAC). Residues 108 to 283 (RVAYQGVRGA…NVTRFLMLAR (176 aa)) form the Prephenate dehydratase domain. The 92-residue stretch at 297 to 388 (SVVFSLDEGP…TFLRVLGSYP (92 aa)) folds into the ACT domain.

Expressed at low levels in petals (corollas and tubes), stems, leaves, pistils, stamens, ovaries and sepals.

It localises to the plastid. Its subcellular location is the chloroplast stroma. It catalyses the reaction prephenate + H(+) = 3-phenylpyruvate + CO2 + H2O. The enzyme catalyses L-arogenate + H(+) = L-phenylalanine + CO2 + H2O. Its pathway is amino-acid biosynthesis; L-phenylalanine biosynthesis; L-phenylalanine from L-arogenate: step 1/1. Functionally, converts the prephenate and L-arogenate produced from the shikimate-chorismate pathway into 3-phenylpyruvate and phenylalanine (Phe), respectively. Involved in floral volatile benzenoids and phenylpropanoids (FVBP) production. This is Arogenate dehydratase 2 from Petunia hybrida (Petunia).